Here is a 347-residue protein sequence, read N- to C-terminus: DNA-directed RNA polymerase subunit alpha (347 aa).

The interval 1–226 (MLISQRPTLS…ELFGLARELN (226 aa)) is alpha N-terminal domain (alpha-NTD). Positions 241 to 347 (ADHIASFALP…DQDYAETEQL (107 aa)) are alpha C-terminal domain (alpha-CTD).

The protein belongs to the RNA polymerase alpha chain family. Homodimer. The RNAP catalytic core consists of 2 alpha, 1 beta, 1 beta' and 1 omega subunit. When a sigma factor is associated with the core the holoenzyme is formed, which can initiate transcription.

The enzyme catalyses RNA(n) + a ribonucleoside 5'-triphosphate = RNA(n+1) + diphosphate. Functionally, DNA-dependent RNA polymerase catalyzes the transcription of DNA into RNA using the four ribonucleoside triphosphates as substrates. This chain is DNA-directed RNA polymerase subunit alpha, found in Mycobacterium ulcerans (strain Agy99).